The following is a 258-amino-acid chain: MLILISPAKTLDYQSPLPTTRYTLPELLDNSQQLIHEARKLTPPQISTLMRISDKLAGINAARFNDWQPDFTPENARQAILAFKGDVYTGLQAETFSEDDFDFAQQHLRMLSGLYGVLRPLDLMQPYRLEMGIRLENARGKDLYQFWGDIITNKLNEALAAQGDNVVINLASDEYFKSVKPKKLNAEIIKPVFLDEKNGKFKIISFYAKKARGLMSRFIIENRLTKPEQLTGFNSEGYFFDEASSSNGELVFKRYEQR.

Belongs to the UPF0246 family.

This chain is UPF0246 protein YaaA, found in Escherichia coli O17:K52:H18 (strain UMN026 / ExPEC).